Reading from the N-terminus, the 144-residue chain is Large ribosomal subunit protein uL15 (144 aa).

Positions 1 to 56 (MELNNLKPAAGAKHAKRRVGRGIGSGLGKTAGRGHKGQKSRSGGFHKVGFEGGQMP) are disordered. The segment covering 21-31 (RGIGSGLGKTA) has biased composition (gly residues).

This sequence belongs to the universal ribosomal protein uL15 family. In terms of assembly, part of the 50S ribosomal subunit.

Functionally, binds to the 23S rRNA. The sequence is that of Large ribosomal subunit protein uL15 from Burkholderia multivorans (strain ATCC 17616 / 249).